A 352-amino-acid chain; its full sequence is DNA polymerase IV (352 aa).

One can recognise a UmuC domain in the interval Ile-4–Gly-185. 2 residues coordinate Mg(2+): Asp-8 and Asp-103. Glu-104 is a catalytic residue.

The protein belongs to the DNA polymerase type-Y family. Monomer. Requires Mg(2+) as cofactor.

Its subcellular location is the cytoplasm. The enzyme catalyses DNA(n) + a 2'-deoxyribonucleoside 5'-triphosphate = DNA(n+1) + diphosphate. Poorly processive, error-prone DNA polymerase involved in untargeted mutagenesis. Copies undamaged DNA at stalled replication forks, which arise in vivo from mismatched or misaligned primer ends. These misaligned primers can be extended by PolIV. Exhibits no 3'-5' exonuclease (proofreading) activity. May be involved in translesional synthesis, in conjunction with the beta clamp from PolIII. The sequence is that of DNA polymerase IV from Yersinia enterocolitica serotype O:8 / biotype 1B (strain NCTC 13174 / 8081).